A 251-amino-acid chain; its full sequence is Pyridoxine 5'-phosphate synthase (251 aa).

Asn-7 contacts 3-amino-2-oxopropyl phosphate. 1-deoxy-D-xylulose 5-phosphate is bound at residue 9 to 10 (DH). Arg-18 is a 3-amino-2-oxopropyl phosphate binding site. His-43 acts as the Proton acceptor in catalysis. Arg-45 and His-50 together coordinate 1-deoxy-D-xylulose 5-phosphate. Glu-73 acts as the Proton acceptor in catalysis. 1-deoxy-D-xylulose 5-phosphate is bound at residue Thr-103. The Proton donor role is filled by His-197. 3-amino-2-oxopropyl phosphate contacts are provided by residues Gly-198 and 219–220 (GH).

This sequence belongs to the PNP synthase family. As to quaternary structure, homooctamer; tetramer of dimers.

It is found in the cytoplasm. The enzyme catalyses 3-amino-2-oxopropyl phosphate + 1-deoxy-D-xylulose 5-phosphate = pyridoxine 5'-phosphate + phosphate + 2 H2O + H(+). Its pathway is cofactor biosynthesis; pyridoxine 5'-phosphate biosynthesis; pyridoxine 5'-phosphate from D-erythrose 4-phosphate: step 5/5. In terms of biological role, catalyzes the complicated ring closure reaction between the two acyclic compounds 1-deoxy-D-xylulose-5-phosphate (DXP) and 3-amino-2-oxopropyl phosphate (1-amino-acetone-3-phosphate or AAP) to form pyridoxine 5'-phosphate (PNP) and inorganic phosphate. This is Pyridoxine 5'-phosphate synthase from Caulobacter sp. (strain K31).